A 224-amino-acid polypeptide reads, in one-letter code: Orotate phosphoribosyltransferase (224 aa).

5-phospho-alpha-D-ribose 1-diphosphate is bound by residues Lys26, 73–74, Arg100, Lys101, Lys104, His106, and 127–135; these read YK and EDVTTAGTS. Orotate-binding residues include Thr131 and Arg160.

It belongs to the purine/pyrimidine phosphoribosyltransferase family. PyrE subfamily. As to quaternary structure, homodimer. The cofactor is Mg(2+).

It carries out the reaction orotidine 5'-phosphate + diphosphate = orotate + 5-phospho-alpha-D-ribose 1-diphosphate. It participates in pyrimidine metabolism; UMP biosynthesis via de novo pathway; UMP from orotate: step 1/2. In terms of biological role, catalyzes the transfer of a ribosyl phosphate group from 5-phosphoribose 1-diphosphate to orotate, leading to the formation of orotidine monophosphate (OMP). This chain is Orotate phosphoribosyltransferase, found in Clostridium beijerinckii (strain ATCC 51743 / NCIMB 8052) (Clostridium acetobutylicum).